The primary structure comprises 213 residues: Ribosomal RNA small subunit methyltransferase G (213 aa).

Residues Gly-75, Phe-80, 128 to 129 (IE), and Arg-144 contribute to the S-adenosyl-L-methionine site.

It belongs to the methyltransferase superfamily. RNA methyltransferase RsmG family.

It localises to the cytoplasm. It carries out the reaction guanosine(527) in 16S rRNA + S-adenosyl-L-methionine = N(7)-methylguanosine(527) in 16S rRNA + S-adenosyl-L-homocysteine. Functionally, specifically methylates the N7 position of guanine in position 527 of 16S rRNA. The chain is Ribosomal RNA small subunit methyltransferase G from Brucella abortus (strain S19).